The following is a 276-amino-acid chain: Sulfur carrier protein FdhD (276 aa).

Cysteine 120 functions as the Cysteine persulfide intermediate in the catalytic mechanism.

This sequence belongs to the FdhD family.

The protein resides in the cytoplasm. Its function is as follows. Required for formate dehydrogenase (FDH) activity. Acts as a sulfur carrier protein that transfers sulfur from IscS to the molybdenum cofactor prior to its insertion into FDH. This chain is Sulfur carrier protein FdhD, found in Bordetella bronchiseptica (strain ATCC BAA-588 / NCTC 13252 / RB50) (Alcaligenes bronchisepticus).